Here is a 196-residue protein sequence, read N- to C-terminus: Superoxide dismutase [Fe] (196 aa).

Fe cation-binding residues include His-20, His-68, Asp-157, and His-161.

The protein belongs to the iron/manganese superoxide dismutase family. As to quaternary structure, homotetramer. The cofactor is Fe cation.

The catalysed reaction is 2 superoxide + 2 H(+) = H2O2 + O2. Its function is as follows. Destroys superoxide anion radicals which are normally produced within the cells and which are toxic to biological systems. This is Superoxide dismutase [Fe] from Tetrahymena pyriformis.